A 385-amino-acid chain; its full sequence is Rubredoxin-NAD(+) reductase (385 aa).

FAD-binding positions include 8-11, 32-33, Ile79, Glu156, Asp275, and Ile293; these read AGTA and SR.

This sequence belongs to the FAD-dependent oxidoreductase family. Homodimer. FAD serves as cofactor.

It is found in the cytoplasm. It carries out the reaction 2 reduced [rubredoxin] + NAD(+) + H(+) = 2 oxidized [rubredoxin] + NADH. The protein operates within hydrocarbon metabolism; alkane degradation. In terms of biological role, involved in the hydrocarbon hydroxylating system, which transfers electrons from NADH to rubredoxin reductase and then through rubredoxin to alkane 1 monooxygenase. The chain is Rubredoxin-NAD(+) reductase (alkT) from Pseudomonas putida (Arthrobacter siderocapsulatus).